Here is a 94-residue protein sequence, read N- to C-terminus: MTKSELIERLASQQPHLPAKAVEDAVKEMLEHMAATLADGERIEIRGFGSFSLHYRAPRIGRNPKTGEKVELEGKYVPHFKPGKELRDRANIYA.

Belongs to the bacterial histone-like protein family. As to quaternary structure, heterodimer of an alpha and a beta chain.

Functionally, this protein is one of the two subunits of integration host factor, a specific DNA-binding protein that functions in genetic recombination as well as in transcriptional and translational control. In Edwardsiella ictaluri (strain 93-146), this protein is Integration host factor subunit beta.